Reading from the N-terminus, the 167-residue chain is Small ribosomal subunit protein uS5 (167 aa).

The S5 DRBM domain maps to 12 to 75; that stretch reads LEDNVVAINR…EAARKNLIEV (64 aa).

Belongs to the universal ribosomal protein uS5 family. In terms of assembly, part of the 30S ribosomal subunit. Contacts proteins S4 and S8.

Functionally, with S4 and S12 plays an important role in translational accuracy. Located at the back of the 30S subunit body where it stabilizes the conformation of the head with respect to the body. The sequence is that of Small ribosomal subunit protein uS5 from Levilactobacillus brevis (strain ATCC 367 / BCRC 12310 / CIP 105137 / JCM 1170 / LMG 11437 / NCIMB 947 / NCTC 947) (Lactobacillus brevis).